Consider the following 89-residue polypeptide: Small ribosomal subunit protein uS15 (89 aa).

The protein belongs to the universal ribosomal protein uS15 family. In terms of assembly, part of the 30S ribosomal subunit. Forms a bridge to the 50S subunit in the 70S ribosome, contacting the 23S rRNA.

Functionally, one of the primary rRNA binding proteins, it binds directly to 16S rRNA where it helps nucleate assembly of the platform of the 30S subunit by binding and bridging several RNA helices of the 16S rRNA. In terms of biological role, forms an intersubunit bridge (bridge B4) with the 23S rRNA of the 50S subunit in the ribosome. The polypeptide is Small ribosomal subunit protein uS15 (Geobacillus kaustophilus (strain HTA426)).